The sequence spans 825 residues: Trimethylamine-N-oxide reductase (825 aa).

A signal peptide (tat-type signal) is located at residues 1 to 40; that stretch reads MKKNNVNEQRRDFLKKTSLGVAGSALSGGMVGVVSKSAVA. Residue Ser-187 coordinates Mo-bis(molybdopterin guanine dinucleotide).

The protein belongs to the prokaryotic molybdopterin-containing oxidoreductase family. Mo-bis(molybdopterin guanine dinucleotide) serves as cofactor. Post-translationally, predicted to be exported by the Tat system. The position of the signal peptide cleavage has not been experimentally proven.

The protein resides in the periplasm. It catalyses the reaction trimethylamine + 2 Fe(III)-[cytochrome c] + H2O = trimethylamine N-oxide + 2 Fe(II)-[cytochrome c] + 3 H(+). In terms of biological role, reduces trimethylamine-N-oxide (TMAO) into trimethylamine; an anaerobic reaction coupled to energy-yielding reactions. This is Trimethylamine-N-oxide reductase (torZ) from Haemophilus influenzae (strain ATCC 51907 / DSM 11121 / KW20 / Rd).